We begin with the raw amino-acid sequence, 157 residues long: MTDAQGFDALASLSSNPEAAAPAEPKIDAQGRAYATGKRKNAIARVWIKPGKGSITINGRDQEVYFARPVLRMMIAQPLEVTDRLGQFDVVVTVEGSGLSGQAGAIRHGLSKALTYYEPGLRPVLKPHGFLTRDSRVVERKKYGKAKARRSFQFSKR.

Belongs to the universal ribosomal protein uS9 family.

This Caulobacter vibrioides (strain ATCC 19089 / CIP 103742 / CB 15) (Caulobacter crescentus) protein is Small ribosomal subunit protein uS9.